Reading from the N-terminus, the 127-residue chain is Large ribosomal subunit protein uL22 (127 aa).

It belongs to the universal ribosomal protein uL22 family. As to quaternary structure, part of the 50S ribosomal subunit.

This protein binds specifically to 23S rRNA; its binding is stimulated by other ribosomal proteins, e.g. L4, L17, and L20. It is important during the early stages of 50S assembly. It makes multiple contacts with different domains of the 23S rRNA in the assembled 50S subunit and ribosome. In terms of biological role, the globular domain of the protein is located near the polypeptide exit tunnel on the outside of the subunit, while an extended beta-hairpin is found that lines the wall of the exit tunnel in the center of the 70S ribosome. This chain is Large ribosomal subunit protein uL22, found in Rhizorhabdus wittichii (strain DSM 6014 / CCUG 31198 / JCM 15750 / NBRC 105917 / EY 4224 / RW1) (Sphingomonas wittichii).